Reading from the N-terminus, the 127-residue chain is S-adenosylmethionine decarboxylase proenzyme (127 aa).

Residue serine 63 is the Schiff-base intermediate with substrate; via pyruvic acid of the active site. Serine 63 carries the pyruvic acid (Ser); by autocatalysis modification. The Proton acceptor; for processing activity role is filled by histidine 68. Cysteine 83 serves as the catalytic Proton donor; for catalytic activity.

Belongs to the prokaryotic AdoMetDC family. Type 1 subfamily. As to quaternary structure, heterotetramer of two alpha and two beta chains arranged as a dimer of alpha/beta heterodimers. Pyruvate serves as cofactor. In terms of processing, is synthesized initially as an inactive proenzyme. Formation of the active enzyme involves a self-maturation process in which the active site pyruvoyl group is generated from an internal serine residue via an autocatalytic post-translational modification. Two non-identical subunits are generated from the proenzyme in this reaction, and the pyruvate is formed at the N-terminus of the alpha chain, which is derived from the carboxyl end of the proenzyme. The post-translation cleavage follows an unusual pathway, termed non-hydrolytic serinolysis, in which the side chain hydroxyl group of the serine supplies its oxygen atom to form the C-terminus of the beta chain, while the remainder of the serine residue undergoes an oxidative deamination to produce ammonia and the pyruvoyl group blocking the N-terminus of the alpha chain.

It carries out the reaction S-adenosyl-L-methionine + H(+) = S-adenosyl 3-(methylsulfanyl)propylamine + CO2. It functions in the pathway amine and polyamine biosynthesis; S-adenosylmethioninamine biosynthesis; S-adenosylmethioninamine from S-adenosyl-L-methionine: step 1/1. Catalyzes the decarboxylation of S-adenosylmethionine to S-adenosylmethioninamine (dcAdoMet), the propylamine donor required for the synthesis of the polyamines spermine and spermidine from the diamine putrescine. In Carboxydothermus hydrogenoformans (strain ATCC BAA-161 / DSM 6008 / Z-2901), this protein is S-adenosylmethionine decarboxylase proenzyme.